Consider the following 81-residue polypeptide: Cortexin-2 (81 aa).

A helical transmembrane segment spans residues 29–49; sequence TGFAFVGILCIFLGLLIIRCF.

The protein belongs to the cortexin family.

It is found in the membrane. This is Cortexin-2 (CTXN2) from Homo sapiens (Human).